Consider the following 106-residue polypeptide: UPF0145 protein BDI_2732 (106 aa).

Belongs to the UPF0145 family.

The sequence is that of UPF0145 protein BDI_2732 from Parabacteroides distasonis (strain ATCC 8503 / DSM 20701 / CIP 104284 / JCM 5825 / NCTC 11152).